The chain runs to 392 residues: MEFVYDVAESAVSPAVIKVIGLGGGGCNAINNMVANNVRGVEFISANTDAQSLAKNHAAKRIQLGTNLTRGLGAGANPDIGRAAAQEDREAIEEAIRGANMLFITTGMGGGTGTGSAPVVAEIAKSLGILTVAVVTRPFAYEGKRVHVAQAGLEQLKEHVDSLIIIPNDKLMTALGEDVTMREAFRAADNVLRDAVAGISEVVTCPSEIINLDFADVKTVMSNRGIAMMGSGYAQGIDRARMATDQAISSPLLDDVTLDGARGVLVNITTAPGCLKMSELSEVMKIVNQSAHPDLECKFGAAEDETMSEDAIRITIIATGLKEKGAVDFVPAREVEAVAPSKQEQSHNVEGMIRTNRGIRTMNLTAADFDNQSVLDDFEIPAILRRQHNSDK.

GTP-binding positions include Gly-24 to Asn-28, Gly-111 to Gly-113, Glu-142, Arg-145, and Asp-189.

The protein belongs to the FtsZ family. As to quaternary structure, homodimer. Polymerizes to form a dynamic ring structure in a strictly GTP-dependent manner. Interacts directly with several other division proteins.

The protein localises to the cytoplasm. Its function is as follows. Essential cell division protein that forms a contractile ring structure (Z ring) at the future cell division site. The regulation of the ring assembly controls the timing and the location of cell division. One of the functions of the FtsZ ring is to recruit other cell division proteins to the septum to produce a new cell wall between the dividing cells. Binds GTP and shows GTPase activity. This Neisseria meningitidis serogroup A / serotype 4A (strain DSM 15465 / Z2491) protein is Cell division protein FtsZ.